The sequence spans 352 residues: Molybdenum import ATP-binding protein ModC (352 aa).

The 229-residue stretch at 1-229 (MLELNFSQTL…SVMNPWLPKE (229 aa)) folds into the ABC transporter domain. Residue 31-38 (GVSGAGKT) coordinates ATP. The Mop domain maps to 289-352 (QTSIRNVLRA…AQIKSVSITA (64 aa)).

The protein belongs to the ABC transporter superfamily. Molybdate importer (TC 3.A.1.8) family. As to quaternary structure, the complex is composed of two ATP-binding proteins (ModC), two transmembrane proteins (ModB) and a solute-binding protein (ModA).

The protein resides in the cell inner membrane. It catalyses the reaction molybdate(out) + ATP + H2O = molybdate(in) + ADP + phosphate + H(+). Part of the ABC transporter complex ModABC involved in molybdenum import. Responsible for energy coupling to the transport system. The polypeptide is Molybdenum import ATP-binding protein ModC (Escherichia coli O6:K15:H31 (strain 536 / UPEC)).